Here is a 248-residue protein sequence, read N- to C-terminus: tRNA (guanine-N(1)-)-methyltransferase (248 aa).

S-adenosyl-L-methionine-binding positions include G113 and 133 to 138 (IGDYVL).

The protein belongs to the RNA methyltransferase TrmD family. Homodimer.

It is found in the cytoplasm. The enzyme catalyses guanosine(37) in tRNA + S-adenosyl-L-methionine = N(1)-methylguanosine(37) in tRNA + S-adenosyl-L-homocysteine + H(+). Specifically methylates guanosine-37 in various tRNAs. The polypeptide is tRNA (guanine-N(1)-)-methyltransferase (Shewanella denitrificans (strain OS217 / ATCC BAA-1090 / DSM 15013)).